Reading from the N-terminus, the 325-residue chain is UPF0324 membrane protein Bd1437 (325 aa).

Helical transmembrane passes span 21 to 43 (IAAL…GIVL), 58 to 80 (YTHH…MVVG), 87 to 105 (IGYT…MLIG), 115 to 137 (STLI…APTI), 144 to 166 (VSVA…PWIG), 211 to 230 (ARAL…YFRG), 243 to 260 (PWFI…TWIP), and 302 to 324 (LQGV…IGWI).

It belongs to the UPF0324 family.

It localises to the cell membrane. The sequence is that of UPF0324 membrane protein Bd1437 from Bdellovibrio bacteriovorus (strain ATCC 15356 / DSM 50701 / NCIMB 9529 / HD100).